The sequence spans 251 residues: CDP-diacylglycerol pyrophosphatase (251 aa).

The helical transmembrane segment at Gly5–Phe25 threads the bilayer.

This sequence belongs to the Cdh family.

The protein localises to the cell inner membrane. The enzyme catalyses a CDP-1,2-diacyl-sn-glycerol + H2O = a 1,2-diacyl-sn-glycero-3-phosphate + CMP + 2 H(+). It participates in phospholipid metabolism; CDP-diacylglycerol degradation; phosphatidate from CDP-diacylglycerol: step 1/1. This is CDP-diacylglycerol pyrophosphatase from Salmonella typhi.